The primary structure comprises 595 residues: RuBisCO large subunit-binding protein subunit beta, chloroplastic (595 aa).

The transit peptide at 1–49 (MASTFSATTSSCNLSSSAAISSFPLAAGKRNANKVVLPRKNRNVKVSAM) directs the protein to the chloroplast.

The protein belongs to the chaperonin (HSP60) family. In terms of assembly, oligomer of probably six alpha and six beta subunits.

The protein localises to the plastid. It localises to the chloroplast. Functionally, this protein binds RuBisCO small and large subunits and is implicated in the assembly of the enzyme oligomer. The sequence is that of RuBisCO large subunit-binding protein subunit beta, chloroplastic from Pisum sativum (Garden pea).